Reading from the N-terminus, the 440-residue chain is 23S rRNA (uracil(1939)-C(5))-methyltransferase RlmD (440 aa).

Residues 10-68 form the TRAM domain; the sequence is KALPTQAVEITIDNLDHHLTGVGRYQGKACFVEGVLPGEKVSVQITEQKKQYAHARLRQ. [4Fe-4S] cluster-binding residues include Cys-81, Cys-87, Cys-90, and Cys-169. Residues Gln-272, Phe-301, Asn-306, Glu-322, Asp-349, and Asp-372 each coordinate S-adenosyl-L-methionine. The Nucleophile role is filled by Cys-398.

The protein belongs to the class I-like SAM-binding methyltransferase superfamily. RNA M5U methyltransferase family. RlmD subfamily.

It carries out the reaction uridine(1939) in 23S rRNA + S-adenosyl-L-methionine = 5-methyluridine(1939) in 23S rRNA + S-adenosyl-L-homocysteine + H(+). Its function is as follows. Catalyzes the formation of 5-methyl-uridine at position 1939 (m5U1939) in 23S rRNA. The polypeptide is 23S rRNA (uracil(1939)-C(5))-methyltransferase RlmD (Tolumonas auensis (strain DSM 9187 / NBRC 110442 / TA 4)).